A 266-amino-acid chain; its full sequence is ATP synthase subunit a (266 aa).

The next 7 membrane-spanning stretches (helical) occupy residues 28–48 (ISFT…AIFM), 90–110 (LIFT…VPLF), 125–145 (VTVT…VGFT), 158–178 (HGTP…SFIL), 187–207 (LFVA…FIVN), 216–236 (AFLA…MIGI), and 239–259 (LEFL…SLYL).

Belongs to the ATPase A chain family. As to quaternary structure, F-type ATPases have 2 components, CF(1) - the catalytic core - and CF(0) - the membrane proton channel. CF(1) has five subunits: alpha(3), beta(3), gamma(1), delta(1), epsilon(1). CF(0) has three main subunits: a(1), b(2) and c(9-12). The alpha and beta chains form an alternating ring which encloses part of the gamma chain. CF(1) is attached to CF(0) by a central stalk formed by the gamma and epsilon chains, while a peripheral stalk is formed by the delta and b chains.

The protein localises to the cell inner membrane. In terms of biological role, key component of the proton channel; it plays a direct role in the translocation of protons across the membrane. The chain is ATP synthase subunit a from Zymomonas mobilis subsp. mobilis (strain ATCC 31821 / ZM4 / CP4).